The primary structure comprises 166 residues: Crossover junction endodeoxyribonuclease RuvC (166 aa).

Residues Asp-12, Glu-71, and Asp-143 contribute to the active site. Residues Asp-12, Glu-71, and Asp-143 each coordinate Mg(2+).

Belongs to the RuvC family. As to quaternary structure, homodimer which binds Holliday junction (HJ) DNA. The HJ becomes 2-fold symmetrical on binding to RuvC with unstacked arms; it has a different conformation from HJ DNA in complex with RuvA. In the full resolvosome a probable DNA-RuvA(4)-RuvB(12)-RuvC(2) complex forms which resolves the HJ. Mg(2+) is required as a cofactor.

The protein localises to the cytoplasm. It catalyses the reaction Endonucleolytic cleavage at a junction such as a reciprocal single-stranded crossover between two homologous DNA duplexes (Holliday junction).. Its function is as follows. The RuvA-RuvB-RuvC complex processes Holliday junction (HJ) DNA during genetic recombination and DNA repair. Endonuclease that resolves HJ intermediates. Cleaves cruciform DNA by making single-stranded nicks across the HJ at symmetrical positions within the homologous arms, yielding a 5'-phosphate and a 3'-hydroxyl group; requires a central core of homology in the junction. The consensus cleavage sequence is 5'-(A/T)TT(C/G)-3'. Cleavage occurs on the 3'-side of the TT dinucleotide at the point of strand exchange. HJ branch migration catalyzed by RuvA-RuvB allows RuvC to scan DNA until it finds its consensus sequence, where it cleaves and resolves the cruciform DNA. The sequence is that of Crossover junction endodeoxyribonuclease RuvC from Oleidesulfovibrio alaskensis (strain ATCC BAA-1058 / DSM 17464 / G20) (Desulfovibrio alaskensis).